The primary structure comprises 116 residues: Ribonuclease P protein component (116 aa).

This sequence belongs to the RnpA family. As to quaternary structure, consists of a catalytic RNA component (M1 or rnpB) and a protein subunit.

The catalysed reaction is Endonucleolytic cleavage of RNA, removing 5'-extranucleotides from tRNA precursor.. Its function is as follows. RNaseP catalyzes the removal of the 5'-leader sequence from pre-tRNA to produce the mature 5'-terminus. It can also cleave other RNA substrates such as 4.5S RNA. The protein component plays an auxiliary but essential role in vivo by binding to the 5'-leader sequence and broadening the substrate specificity of the ribozyme. In Exiguobacterium sibiricum (strain DSM 17290 / CCUG 55495 / CIP 109462 / JCM 13490 / 255-15), this protein is Ribonuclease P protein component.